A 1378-amino-acid chain; its full sequence is F-box protein At3g54460 (1378 aa).

Basic and acidic residues predominate over residues 65 to 96; the sequence is GDHDVENSGTIEDGRLETPQKRRKCVEGESSG. A disordered region spans residues 65–113; that stretch reads GDHDVENSGTIEDGRLETPQKRRKCVEGESSGKRKTPKSKRRVLSGSKE. Basic residues predominate over residues 97–107; it reads KRKTPKSKRRV. The F-box domain maps to 282-328; the sequence is VSGVWDLSDDVLISILMKLDTKDLFSIAAVCRLFRSLTSLIVPCMNL. The CW-type zinc-finger motif lies at 571 to 622; the sequence is DVESDIWMQCDSCSKWRRIIDEGVSVTGSAWFCSNNNDPAYQSCNDPEELWD. Residues Cys-580, Cys-583, Cys-603, and Cys-614 each coordinate Zn(2+). Positions 720–885 constitute a Helicase ATP-binding domain; sequence KWFYPKFLEN…LSHIQPLLKF (166 aa). 733 to 740 contributes to the ATP binding site; sequence DVPALKVA. A DEAH box motif is present at residues 834–837; it reads DEGH. The region spanning 1185 to 1324 is the Helicase C-terminal domain; it reads DCGSQMVFVD…DAEKSDRLLS (140 aa).

Belongs to the helicase family.

In Arabidopsis thaliana (Mouse-ear cress), this protein is F-box protein At3g54460.